Here is a 1481-residue protein sequence, read N- to C-terminus: Cystic fibrosis transmembrane conductance regulator (1481 aa).

Residues 1-77 (MQRSPLEKAS…KLINALRRCF (77 aa)) are Cytoplasmic-facing. Residues 78 to 98 (FWRFMFYGIILYLGEVTKAVQ) form a helical membrane-spanning segment. One can recognise an ABC transmembrane type-1 1 domain in the interval 81 to 365 (FMFYGIILYL…WAVQTWYDSL (285 aa)). Residues 99–122 (PLLLGRIIASYDPDNKVERSIAIY) are Extracellular-facing. Residues 123–146 (LGIGLCLLFIVRTLLLHPAIFGLH) traverse the membrane as a helical segment. Over 147-195 (HIGMQMRIAMFSLIYKKTLKLSSRVLDKISIGQLVSLLSNNLNKFDEGL) the chain is Cytoplasmic. A helical membrane pass occupies residues 196–216 (ALAHFVWIAPLQVTLLMGLLW). Residues 217–222 (ELLQAF) lie on the Extracellular side of the membrane. The chain crosses the membrane as a helical span at residues 223–243 (TFCGLAFLIVLALLQAGLGKM). At 244–298 (MMKYRDQRAGKINERLVITSEMIENIQSVKAYCWEEAMEKIIENLRQTELKLTRK) the chain is on the cytoplasmic side. A helical transmembrane segment spans residues 299-319 (AAYVRYLNSSAFFFSGFFVVF). Over 320–339 (LSVLPYALLKGIILRKIFTT) the chain is Extracellular. Residues 340–358 (ISFCIVLRMAVTRQFPWAV) form a helical membrane-spanning segment. Residues 359–858 (QTWYDSLGAI…YLRYITVHKS (500 aa)) lie on the Cytoplasmic side of the membrane. ATP-binding positions include Trp-401, 457-464 (GSTGAGKT), and Gln-492. The ABC transporter 1 domain maps to 423 to 645 (NGDNSLFFSN…RPDFSSKLMG (223 aa)). Cys-523 carries the S-palmitoyl cysteine lipid modification. Ser-548 carries the phosphoserine modification. The disordered R region stretch occupies residues 653-831 (TAERRNSIIT…EEINEEDLRD (179 aa)). Ser-659 and Ser-669 each carry phosphoserine; by PKA. Ser-685 is subject to Phosphoserine; by PKC. Residue Lys-687 forms a Glycyl lysine isopeptide (Lys-Gly) (interchain with G-Cter in ubiquitin) linkage. Ser-699 bears the Phosphoserine; by PKA mark. The residue at position 711 (Ser-711) is a Phosphoserine. Position 716 is a phosphothreonine (Thr-716). A phosphoserine; by PKA mark is found at Ser-736 and Ser-767. Residue Ser-790 is modified to Phosphoserine; by PKC. 2 positions are modified to phosphoserine; by PKA: Ser-795 and Ser-813. Residues 859–879 (LMFVLIWCLVVFLVEVAASLV) traverse the membrane as a helical segment. One can recognise an ABC transmembrane type-1 2 domain in the interval 859 to 1155 (LMFVLIWCLV…AVNSSIDVDS (297 aa)). At 880–918 (VLCLFPKIFFQDKGNSTKSANNSYAVIITSTSSYYIFYI) the chain is on the extracellular side. 2 N-linked (GlcNAc...) asparagine glycosylation sites follow: Asn-894 and Asn-900. A discontinuously helical transmembrane segment spans residues 919-939 (YVGVADTLLALGLFRGLPLVH). At 940-990 (TLITVSKTLHHKMLQSVLQAPMSTLNTLKTGGILNRFSKDIAVLDDLLPLT) the chain is on the cytoplasmic side. Residues 991–1011 (IFDFVQLLLIVIGAVVVVSVL) traverse the membrane as a helical segment. Residues 1012–1013 (QP) are Extracellular-facing. A helical membrane pass occupies residues 1014-1034 (YIFLATVPVIAAFILLRAYFL). At 1035–1095 (HTSQQLKQLE…TANWFLYLST (61 aa)) the chain is on the cytoplasmic side. Residues 1096–1116 (LRWFQMRIEMIFVIFFIAVTF) traverse the membrane as a helical segment. Over 1117-1130 (ISILTTGEGEGRVG) the chain is Extracellular. The helical transmembrane segment at 1131-1151 (IILTLAMNIMGTLQWAVNSSI) threads the bilayer. Residues 1152–1481 (DVDSLMRSVS…TEEEVQETKL (330 aa)) lie on the Cytoplasmic side of the membrane. Residues 1211–1444 (MTVKDLTAKY…KSLFRQAISP (234 aa)) enclose the ABC transporter 2 domain. Residues Tyr-1220 and 1245 to 1252 (GRTGSGKS) contribute to the ATP site. The tract at residues 1387-1481 (RTLKQAFANC…TEEEVQETKL (95 aa)) is interaction with GORASP2. A lipid anchor (S-palmitoyl cysteine) is attached at Cys-1396. Positions 1453 to 1481 (HRNSSRQRSRSNIAALKEETEEEVQETKL) are disordered. Ser-1457 is modified (phosphoserine). Positions 1471–1481 (ETEEEVQETKL) are enriched in acidic residues. The short motif at 1479 to 1481 (TKL) is the PDZ-binding element.

Belongs to the ABC transporter superfamily. ABCC family. CFTR transporter (TC 3.A.1.202) subfamily. As to quaternary structure, monomer; does not require oligomerization for channel activity. May form oligomers in the membrane. Interacts with SLC26A3, SLC26A6 and NHERF1. Interacts with SHANK2. Interacts with MYO6. Interacts (via C-terminus) with GOPC (via PDZ domain); this promotes CFTR internalization and thereby decreases channel activity. Interacts with SLC4A7 through NHERF1. Found in a complex with MYO5B and RAB11A. Interacts with ANO1. Interacts with SLC26A8. Interacts with AHCYL1; the interaction increases CFTR activity. Interacts with CSE1L. The core-glycosylated form interacts with GORASP2 (via PDZ GRASP-type 1 domain) in respone to ER stress. Interacts with MARCHF2; the interaction leads to CFTR ubiqtuitination and degradation. Interacts with ADGRG2. Post-translationally, N-glycosylated. Phosphorylated; cAMP treatment promotes phosphorylation and activates the channel. Dephosphorylation decreases the ATPase activity (in vitro). Phosphorylation at PKA sites activates the channel. Phosphorylation at PKC sites enhances the response to phosphorylation by PKA. Phosphorylated by AMPK; this inhibits channel activity. In terms of processing, ubiquitinated, leading to its degradation in the lysosome. Deubiquitination by USP10 in early endosomes enhances its endocytic recycling to the cell membrane. Ubiquitinated by RNF185 during ER stress. Ubiquitinated by MARCHF2.

The protein resides in the apical cell membrane. The protein localises to the early endosome membrane. It is found in the cell membrane. It localises to the recycling endosome membrane. Its subcellular location is the endoplasmic reticulum membrane. The protein resides in the nucleus. It carries out the reaction ATP + H2O + closed Cl(-) channel = ADP + phosphate + open Cl(-) channel.. The catalysed reaction is chloride(in) = chloride(out). The enzyme catalyses hydrogencarbonate(in) = hydrogencarbonate(out). It catalyses the reaction ATP + H2O = ADP + phosphate + H(+). Epithelial ion channel that plays an important role in the regulation of epithelial ion and water transport and fluid homeostasis. Mediates the transport of chloride ions across the cell membrane. Possesses an intrinsic ATPase activity and utilizes ATP to gate its channel; the passive flow of anions through the channel is gated by cycles of ATP binding and hydrolysis by the ATP-binding domains. The ion channel is also permeable to HCO(3)(-); selectivity depends on the extracellular chloride concentration. Exerts its function also by modulating the activity of other ion channels and transporters. Contributes to the regulation of the pH and the ion content of the epithelial fluid layer. Modulates the activity of the epithelial sodium channel (ENaC) complex, in part by regulating the cell surface expression of the ENaC complex. May regulate bicarbonate secretion and salvage in epithelial cells by regulating the transporter SLC4A7. Can inhibit the chloride channel activity of ANO1. Plays a role in the chloride and bicarbonate homeostasis during sperm epididymal maturation and capacitation. The protein is Cystic fibrosis transmembrane conductance regulator of Bos taurus (Bovine).